The following is a 273-amino-acid chain: NADPH-dependent 7-cyano-7-deazaguanine reductase (273 aa).

81-83 (VES) serves as a coordination point for substrate. 83–84 (SK) is an NADPH binding site. The active-site Thioimide intermediate is C179. D186 serves as the catalytic Proton donor. A substrate-binding site is contributed by 218–219 (AE). An NADPH-binding site is contributed by 247-248 (RG).

Belongs to the GTP cyclohydrolase I family. QueF type 2 subfamily. In terms of assembly, homodimer.

The protein resides in the cytoplasm. It carries out the reaction 7-aminomethyl-7-carbaguanine + 2 NADP(+) = 7-cyano-7-deazaguanine + 2 NADPH + 3 H(+). It participates in tRNA modification; tRNA-queuosine biosynthesis. Functionally, catalyzes the NADPH-dependent reduction of 7-cyano-7-deazaguanine (preQ0) to 7-aminomethyl-7-deazaguanine (preQ1). This chain is NADPH-dependent 7-cyano-7-deazaguanine reductase, found in Rickettsia prowazekii (strain Madrid E).